Reading from the N-terminus, the 293-residue chain is Ribulose bisphosphate carboxylase/oxygenase activase, chloroplastic (293 aa).

Residue 75–82 (PGTGKTTV) participates in ATP binding.

It belongs to the CbxX/CfxQ family. Forms homooligomers. Forms heterohexameric rings with the nuclear-encoded Rca subunit consisting of 3 of each nuclear- and plastidial-encoded subunits that alternate in the ring.

The protein resides in the plastid. It localises to the chloroplast. Functionally, required for the expression of ribulose 1,5-bisphosphate carboxylase/oxygenase (RuBisCo). ATPase involved in the activation of red-type RuBisCo, which tends to form inactive complexes with its substrate ribulose 1,5-bisphosphate (RuBP). Catalyzes the release of RuBP from inhibited RuBisCo in an ATP-dependent manner. Activation of RuBisCO involves the ATP-dependent carboxylation of the epsilon-amino group of lysine leading to a carbamate structure. The nuclear-encoded subunit plays a more critical role in activase function than the plastidial-encoded subunit. The polypeptide is Ribulose bisphosphate carboxylase/oxygenase activase, chloroplastic (Cyanidioschyzon merolae (strain NIES-3377 / 10D) (Unicellular red alga)).